The following is an 81-amino-acid chain: Large ribosomal subunit protein uL23 (81 aa).

The protein belongs to the universal ribosomal protein uL23 family. Part of the 50S ribosomal subunit. Contacts protein L29.

Functionally, binds to 23S rRNA. One of the proteins that surrounds the polypeptide exit tunnel on the outside of the ribosome. In Pyrobaculum aerophilum (strain ATCC 51768 / DSM 7523 / JCM 9630 / CIP 104966 / NBRC 100827 / IM2), this protein is Large ribosomal subunit protein uL23.